Reading from the N-terminus, the 227-residue chain is Max dimerization protein 1 (227 aa).

Positions 21–48 match the Nuclear localization signal motif; it reads RREREAEHGYASMLPYSKDRDAFKRRNK. 3 disordered regions span residues 30–66, 142–161, and 184–227; these read YASM…MEKN, MDSV…REEL, and GWSS…GLGL. In terms of domain architecture, bHLH spans 55–107; that stretch reads SSRSTHNEMEKNRRAHLRLCLEKLKGLVPLGPESSRHTTLSLLTKAKLHIKKL. Polar residues predominate over residues 198 to 211; the sequence is MQSLGSDEGYSSAT. Residues 216–227 show a composition bias toward basic and acidic residues; it reads KLQDGHKAGLGL.

As to quaternary structure, heterodimer with MAX; the interaction is required for DNA-binding. DNA binding requires dimerization with another bHLH protein; does not form homodimers, and does not bind to DNA in the absence of MAX in vitro. Interacts with RNF17. Ubiquitinated by BIRC2/c-IAP1, leading to its subsequent degradation by the proteasome.

The protein localises to the nucleus. Its function is as follows. Component of a transcriptional repressor complex together with MAX. In complex with MAX binds to the core DNA sequence 5'-CAC[GA]TG-3'. Antagonizes MYC transcriptional activity by competing with MYC for MAX binding. Binds to the TERT promoter and represses telomerase expression, possibly by interfering with MYC binding. The polypeptide is Max dimerization protein 1 (Mxd1) (Mus musculus (Mouse)).